A 261-amino-acid polypeptide reads, in one-letter code: Kallikrein 1-related peptidase b3 (261 aa).

The N-terminal stretch at 1–18 (MWFLILFLALSLGGIDAA) is a signal peptide. The propeptide at 19–24 (PPVQSR) is activation peptide. Residues 25-107 (IVGGFKCEKN…HPGFNMSLMR (83 aa)) form a segment B1 region. Positions 25 to 258 (IVGGFKCEKN…FTSWIKDTMA (234 aa)) constitute a Peptidase S1 domain. Disulfide bonds link Cys31–Cys173, Cys50–Cys66, Cys152–Cys219, Cys184–Cys198, and Cys209–Cys234. The Charge relay system role is filled by His65. Asn102 carries an N-linked (GlcNAc...) asparagine glycan. Residues 112-164 (FLEYDYSNDLMLLRLSKPADITDTVKPITLPTEEPKLGSTCLASGWGSITPTK) form a segment C region. Positions 112 to 261 (FLEYDYSNDL…WIKDTMAKNP (150 aa)) are segment A. Catalysis depends on Asp120, which acts as the Charge relay system. Residues 165 to 261 (FQFTDDLYCV…WIKDTMAKNP (97 aa)) are segment B2. Catalysis depends on Ser213, which acts as the Charge relay system. 2 residues coordinate Zn(2+): His231 and Glu236.

Belongs to the peptidase S1 family. Kallikrein subfamily. 7S nerve growth factor is composed of two alpha chains, a beta dimer composed of identical chains, and two gamma chains. Zn(2+) is required as a cofactor.

The enzyme catalyses Preferential cleavage of Arg-|-Xaa bonds in small molecule substrates. Highly selective action to release kallidin (lysyl-bradykinin) from kininogen involves hydrolysis of Met-|-Xaa or Leu-|-Xaa.. 7S NGF alpha chain stabilizes the 7S complex. The beta dimer promotes neurite growth. The gamma chain is an arginine-specific protease; it may also have plasminogen activator activity, as well as mitogenic activity for chick embryo fibroblasts. This is Kallikrein 1-related peptidase b3 (Klk1b3) from Mus musculus (Mouse).